The chain runs to 419 residues: tRNA(Ile)-lysidine synthase (419 aa).

31–36 (SGGGDS) lines the ATP pocket.

This sequence belongs to the tRNA(Ile)-lysidine synthase family.

Its subcellular location is the cytoplasm. The enzyme catalyses cytidine(34) in tRNA(Ile2) + L-lysine + ATP = lysidine(34) in tRNA(Ile2) + AMP + diphosphate + H(+). Ligates lysine onto the cytidine present at position 34 of the AUA codon-specific tRNA(Ile) that contains the anticodon CAU, in an ATP-dependent manner. Cytidine is converted to lysidine, thus changing the amino acid specificity of the tRNA from methionine to isoleucine. The polypeptide is tRNA(Ile)-lysidine synthase (Ruegeria pomeroyi (strain ATCC 700808 / DSM 15171 / DSS-3) (Silicibacter pomeroyi)).